The chain runs to 389 residues: MYKTKGGFQLTLQTLSLVVGFMAWSIIAPLMPFIKQDVNVTEGQISIILAIPVILGSVLRVPFGYLTNIVGAKWVFFTSFIVLLFPIFFLSQAQTPGMLMASGFFLGVGGAIFSVGVTSVPKYFPKEKVGLANGIYGMGNIGTAVSSFLAPPIAGIIGWQTTVRSYLIIIALFALIMFIFGDTQERKIKVPLMAQMKTLSKNYKLYYLSYWYFITFGAFVAFGIFLPNYLVNHFGIDKVDAGIRSGVFIALATFLRPIGGILGDKFNAVKVLMIDFVVMIIGAIILGISDHIALFTVGCLTISICAGIGNGLIFKLVPSYFLNEAGSANGIVSMMGGLGGFFPPLVITYVANLTGSSHLAFIFLAVFGCIALFTMRHLYQKEYGSLKNG.

12 helical membrane-spanning segments follow: residues 14-34 (TLSLVVGFMAWSIIAPLMPFI), 45-65 (ISIILAIPVILGSVLRVPFGY), 69-89 (IVGAKWVFFTSFIVLLFPIFF), 97-117 (GMLMASGFFLGVGGAIFSVGV), 139-159 (GNIGTAVSSFLAPPIAGIIGW), 161-181 (TTVRSYLIIIALFALIMFIFG), 211-231 (WYFITFGAFVAFGIFLPNYLV), 246-266 (GVFIALATFLRPIGGILGDKF), 268-288 (AVKVLMIDFVVMIIGAIILGI), 294-314 (LFTVGCLTISICAGIGNGLIF), 331-351 (IVSMMGGLGGFFPPLVITYVA), and 353-373 (LTGSSHLAFIFLAVFGCIALF).

The protein belongs to the major facilitator superfamily. Nitrate/nitrite porter (TC 2.A.1.8) family.

It localises to the cell membrane. Its function is as follows. Probably required for nitrate uptake under anoxic conditions. Also possibly involved in excretion of nitrite produced by the dissimilatory reduction of nitrate. In Staphylococcus aureus (strain USA300), this protein is Probable nitrate transporter NarT (narT).